The primary structure comprises 73 residues: Translation initiation factor IF-1 (73 aa).

An S1-like domain is found at 1–73; the sequence is MAKKDGAIEV…SRGRIVYRYK (73 aa).

The protein belongs to the IF-1 family. Component of the 30S ribosomal translation pre-initiation complex which assembles on the 30S ribosome in the order IF-2 and IF-3, IF-1 and N-formylmethionyl-tRNA(fMet); mRNA recruitment can occur at any time during PIC assembly.

The protein resides in the cytoplasm. One of the essential components for the initiation of protein synthesis. Stabilizes the binding of IF-2 and IF-3 on the 30S subunit to which N-formylmethionyl-tRNA(fMet) subsequently binds. Helps modulate mRNA selection, yielding the 30S pre-initiation complex (PIC). Upon addition of the 50S ribosomal subunit IF-1, IF-2 and IF-3 are released leaving the mature 70S translation initiation complex. The chain is Translation initiation factor IF-1 from Mycobacterium avium (strain 104).